The sequence spans 684 residues: UvrABC system protein B (684 aa).

The region spanning 32–420 is the Helicase ATP-binding domain; that stretch reads DGVLRGDRWQ…GGVVVEQLIR (389 aa). Position 45–52 (45–52) interacts with ATP; it reads GVTGSGKT. Positions 98-121 match the Beta-hairpin motif; the sequence is YYDFYQPEAYIPSLDKYIAKDLKI. The region spanning 437-603 is the Helicase C-terminal domain; the sequence is QIDHLLARIR…SIIKSVDQVL (167 aa). One can recognise a UVR domain in the interval 643 to 678; the sequence is MLMVAEMNAEMQKAAEQTDYEKAAYLRDEILMLQER.

The protein belongs to the UvrB family. Forms a heterotetramer with UvrA during the search for lesions. Interacts with UvrC in an incision complex.

The protein localises to the cytoplasm. In terms of biological role, the UvrABC repair system catalyzes the recognition and processing of DNA lesions. A damage recognition complex composed of 2 UvrA and 2 UvrB subunits scans DNA for abnormalities. Upon binding of the UvrA(2)B(2) complex to a putative damaged site, the DNA wraps around one UvrB monomer. DNA wrap is dependent on ATP binding by UvrB and probably causes local melting of the DNA helix, facilitating insertion of UvrB beta-hairpin between the DNA strands. Then UvrB probes one DNA strand for the presence of a lesion. If a lesion is found the UvrA subunits dissociate and the UvrB-DNA preincision complex is formed. This complex is subsequently bound by UvrC and the second UvrB is released. If no lesion is found, the DNA wraps around the other UvrB subunit that will check the other stand for damage. The protein is UvrABC system protein B of Chlorobaculum tepidum (strain ATCC 49652 / DSM 12025 / NBRC 103806 / TLS) (Chlorobium tepidum).